Here is a 325-residue protein sequence, read N- to C-terminus: Glycerol-3-phosphate dehydrogenase [NAD(P)+] (325 aa).

S14, F15, R35, and K109 together coordinate NADPH. The sn-glycerol 3-phosphate site is built by K109 and G137. A141 contributes to the NADPH binding site. The sn-glycerol 3-phosphate site is built by K192, D247, S257, R258, and N259. The active-site Proton acceptor is K192. R258 serves as a coordination point for NADPH. NADPH is bound by residues L282 and E284.

The protein belongs to the NAD-dependent glycerol-3-phosphate dehydrogenase family.

The protein resides in the cytoplasm. The enzyme catalyses sn-glycerol 3-phosphate + NAD(+) = dihydroxyacetone phosphate + NADH + H(+). The catalysed reaction is sn-glycerol 3-phosphate + NADP(+) = dihydroxyacetone phosphate + NADPH + H(+). It functions in the pathway membrane lipid metabolism; glycerophospholipid metabolism. Catalyzes the reduction of the glycolytic intermediate dihydroxyacetone phosphate (DHAP) to sn-glycerol 3-phosphate (G3P), the key precursor for phospholipid synthesis. This chain is Glycerol-3-phosphate dehydrogenase [NAD(P)+], found in Rickettsia africae (strain ESF-5).